A 300-amino-acid chain; its full sequence is GTPase Era (300 aa).

One can recognise an Era-type G domain in the interval 5-172; sequence HSGFVAIIGR…LTALTDALPV (168 aa). The tract at residues 13–20 is G1; the sequence is GRPNVGKS. 13-20 serves as a coordination point for GTP; sequence GRPNVGKS. The G2 stretch occupies residues 39–43; the sequence is QTTRN. The G3 stretch occupies residues 60 to 63; it reads DTPG. GTP is bound by residues 60–64 and 122–125; these read DTPGI and NKID. Residues 122–125 are G4; sequence NKID. Positions 151 to 153 are G5; it reads ISA. In terms of domain architecture, KH type-2 spans 203 to 280; the sequence is TRDEVPHAVA…NLKLWVRVQK (78 aa).

It belongs to the TRAFAC class TrmE-Era-EngA-EngB-Septin-like GTPase superfamily. Era GTPase family. Monomer.

The protein localises to the cytoplasm. The protein resides in the cell membrane. An essential GTPase that binds both GDP and GTP, with rapid nucleotide exchange. Plays a role in 16S rRNA processing and 30S ribosomal subunit biogenesis and possibly also in cell cycle regulation and energy metabolism. This is GTPase Era from Lacticaseibacillus paracasei (strain ATCC 334 / BCRC 17002 / CCUG 31169 / CIP 107868 / KCTC 3260 / NRRL B-441) (Lactobacillus paracasei).